The primary structure comprises 242 residues: uncharacterized protein (242 aa).

The protein belongs to the IIV-6 415R family.

This is an uncharacterized protein from Invertebrate iridescent virus 6 (IIV-6).